The following is a 100-amino-acid chain: Urease subunit gamma (100 aa).

Belongs to the urease gamma subunit family. As to quaternary structure, heterotrimer of UreA (gamma), UreB (beta) and UreC (alpha) subunits. Three heterotrimers associate to form the active enzyme.

The protein resides in the cytoplasm. It carries out the reaction urea + 2 H2O + H(+) = hydrogencarbonate + 2 NH4(+). The protein operates within nitrogen metabolism; urea degradation; CO(2) and NH(3) from urea (urease route): step 1/1. This is Urease subunit gamma from Lachnoclostridium phytofermentans (strain ATCC 700394 / DSM 18823 / ISDg) (Clostridium phytofermentans).